Reading from the N-terminus, the 551-residue chain is Glucans biosynthesis protein D (551 aa).

The segment at residues 1–32 (MDRRRFIKGSMAMAAVCGTSGIASLFSQAAFA) is a signal peptide (tat-type signal).

Belongs to the OpgD/OpgG family. Predicted to be exported by the Tat system. The position of the signal peptide cleavage has not been experimentally proven.

Its subcellular location is the periplasm. Its pathway is glycan metabolism; osmoregulated periplasmic glucan (OPG) biosynthesis. Its function is as follows. Probably involved in the control of the structural glucose backbone of osmoregulated periplasmic glucans (OPGs). This is Glucans biosynthesis protein D from Escherichia coli (strain K12 / MC4100 / BW2952).